A 411-amino-acid polypeptide reads, in one-letter code: Serine hydroxymethyltransferase (411 aa).

Residues Leu-119 and 123–125 (GHL) contribute to the (6S)-5,6,7,8-tetrahydrofolate site. Lys-228 carries the N6-(pyridoxal phosphate)lysine modification. (6S)-5,6,7,8-tetrahydrofolate is bound at residue 351 to 353 (SPF).

This sequence belongs to the SHMT family. In terms of assembly, homodimer. Requires pyridoxal 5'-phosphate as cofactor.

It is found in the cytoplasm. It catalyses the reaction (6R)-5,10-methylene-5,6,7,8-tetrahydrofolate + glycine + H2O = (6S)-5,6,7,8-tetrahydrofolate + L-serine. It participates in one-carbon metabolism; tetrahydrofolate interconversion. The protein operates within amino-acid biosynthesis; glycine biosynthesis; glycine from L-serine: step 1/1. Functionally, catalyzes the reversible interconversion of serine and glycine with tetrahydrofolate (THF) serving as the one-carbon carrier. This reaction serves as the major source of one-carbon groups required for the biosynthesis of purines, thymidylate, methionine, and other important biomolecules. Also exhibits THF-independent aldolase activity toward beta-hydroxyamino acids, producing glycine and aldehydes, via a retro-aldol mechanism. The polypeptide is Serine hydroxymethyltransferase (Clostridium novyi (strain NT)).